The following is a 102-amino-acid chain: Citrate lyase acyl carrier protein (102 aa).

Serine 14 bears the O-(phosphoribosyl dephospho-coenzyme A)serine mark.

The protein belongs to the CitD family. As to quaternary structure, oligomer with a subunit composition of (alpha,beta,gamma)6.

The protein localises to the cytoplasm. Functionally, covalent carrier of the coenzyme of citrate lyase. The chain is Citrate lyase acyl carrier protein from Streptococcus pyogenes serotype M18 (strain MGAS8232).